Here is a 166-residue protein sequence, read N- to C-terminus: 3-hydroxyacyl-[acyl-carrier-protein] dehydratase FabZ (166 aa).

His72 is an active-site residue.

It belongs to the thioester dehydratase family. FabZ subfamily.

It is found in the cytoplasm. The catalysed reaction is a (3R)-hydroxyacyl-[ACP] = a (2E)-enoyl-[ACP] + H2O. Its function is as follows. Involved in unsaturated fatty acids biosynthesis. Catalyzes the dehydration of short chain beta-hydroxyacyl-ACPs and long chain saturated and unsaturated beta-hydroxyacyl-ACPs. This is 3-hydroxyacyl-[acyl-carrier-protein] dehydratase FabZ from Synechococcus sp. (strain JA-2-3B'a(2-13)) (Cyanobacteria bacterium Yellowstone B-Prime).